The chain runs to 79 residues: Protein NOI4 (79 aa).

The interval 31–68 (KARDEKKTGGKPGSPGKSSEGHVKSGGGDPSKPQPKKW) is disordered. S44 carries the post-translational modification Phosphoserine.

The protein belongs to the RIN4 family. In terms of processing, proteolytic cleaved by P.syringae pv tomato AvrRpt2 after Gly-12; this cleavage is critical for subsequent proteasome-dependent elimination.

In Arabidopsis thaliana (Mouse-ear cress), this protein is Protein NOI4.